Reading from the N-terminus, the 431-residue chain is Isocitrate lyase (431 aa).

A disordered region spans residues 1-21 (MSNVGTPRTAQEIQQDWDTNP). A substrate-binding site is contributed by 93-95 (SGW). Asp-155 contacts Mg(2+). Cys-193 functions as the Proton acceptor in the catalytic mechanism. Substrate-binding positions include 194–195 (GH), Arg-230, 315–319 (NCSPS), and Thr-349.

It belongs to the isocitrate lyase/PEP mutase superfamily. Isocitrate lyase family. In terms of assembly, homotetramer. It depends on Mg(2+) as a cofactor.

The enzyme catalyses D-threo-isocitrate = glyoxylate + succinate. It functions in the pathway carbohydrate metabolism; glyoxylate cycle; (S)-malate from isocitrate: step 1/2. In terms of biological role, involved in the metabolic adaptation in response to environmental changes. Catalyzes the reversible formation of succinate and glyoxylate from isocitrate, a key step of the glyoxylate cycle, which operates as an anaplerotic route for replenishing the tricarboxylic acid cycle during growth on fatty acid substrates. The sequence is that of Isocitrate lyase (aceA) from Corynebacterium efficiens (strain DSM 44549 / YS-314 / AJ 12310 / JCM 11189 / NBRC 100395).